The following is a 134-amino-acid chain: Small ribosomal subunit protein uS9 (134 aa).

Positions 109–134 are disordered; sequence DARRTEPHKPSKSSKGPRAKRQKSYR. A compositionally biased stretch (basic residues) spans 118–134; that stretch reads PSKSSKGPRAKRQKSYR.

This sequence belongs to the universal ribosomal protein uS9 family.

The sequence is that of Small ribosomal subunit protein uS9 from Methanococcus maripaludis (strain DSM 14266 / JCM 13030 / NBRC 101832 / S2 / LL).